A 233-amino-acid polypeptide reads, in one-letter code: Transmembrane protein 40 (233 aa).

Residue Met1 is modified to N-acetylmethionine. Polar residues predominate over residues 1–14 (METSASSSQPQDNS). The segment at 1–143 (METSASSSQP…RRGSDPASGE (143 aa)) is disordered. The segment covering 50-70 (SSSSSSSSSSSSSSSSSSSSS) has biased composition (low complexity). Positions 93–104 (YPHGNGSPGPGH) are enriched in gly residues. Basic and acidic residues predominate over residues 105-114 (GEPDVLKDEL). Position 137 is a phosphoserine (Ser137). 2 helical membrane-spanning segments follow: residues 160-180 (FFHF…YHYY) and 187-207 (LGVG…FGLV).

The protein resides in the membrane. In Homo sapiens (Human), this protein is Transmembrane protein 40 (TMEM40).